The following is a 201-amino-acid chain: Recombination protein RecR (201 aa).

The C4-type zinc finger occupies 60 to 75; the sequence is CSRCGNVDTVDPCTVC. The region spanning 83–178 is the Toprim domain; sequence SIIIVVEDVS…KITRLAHGVP (96 aa).

It belongs to the RecR family.

Functionally, may play a role in DNA repair. It seems to be involved in an RecBC-independent recombinational process of DNA repair. It may act with RecF and RecO. In Rhizobium leguminosarum bv. trifolii (strain WSM2304), this protein is Recombination protein RecR.